Reading from the N-terminus, the 373-residue chain is Flagellar P-ring protein (373 aa).

An N-terminal signal peptide occupies residues M1–A30.

The protein belongs to the FlgI family. The basal body constitutes a major portion of the flagellar organelle and consists of four rings (L,P,S, and M) mounted on a central rod.

The protein resides in the periplasm. It is found in the bacterial flagellum basal body. Assembles around the rod to form the L-ring and probably protects the motor/basal body from shearing forces during rotation. The polypeptide is Flagellar P-ring protein (Aliivibrio fischeri (strain ATCC 700601 / ES114) (Vibrio fischeri)).